Here is a 306-residue protein sequence, read N- to C-terminus: Probable C-terminal domain small phosphatase (306 aa).

Residues 1 to 36 (MNSSPITQVSNPNDSLNHSSTNLIPSSHNSLNNYPQ) show a composition bias toward polar residues. Disordered stretches follow at residues 1–45 (MNSS…NRKK) and 61–116 (NDQN…NKDS). Residues 61-111 (NDQNNGNNINTDNGASNNDKLQQQKQYNQQQQQQYNQHQQQQQQQQQQQQY) show a composition bias toward low complexity. Residues 132–290 (RHVGLKTLVL…LDLLPLLDDL (159 aa)) enclose the FCP1 homology domain. D142 serves as the catalytic 4-aspartylphosphate intermediate. D142, D144, and N253 together coordinate Mg(2+). Residue D144 is the Proton donor of the active site.

Monomer. The cofactor is Mg(2+).

It is found in the nucleus. The enzyme catalyses O-phospho-L-seryl-[protein] + H2O = L-seryl-[protein] + phosphate. The catalysed reaction is O-phospho-L-threonyl-[protein] + H2O = L-threonyl-[protein] + phosphate. Its function is as follows. May function as a phosphatase involved in the regulation of cell growth and differentiation. This chain is Probable C-terminal domain small phosphatase (fcpA), found in Dictyostelium discoideum (Social amoeba).